Consider the following 208-residue polypeptide: Uracil phosphoribosyltransferase (208 aa).

5-phospho-alpha-D-ribose 1-diphosphate-binding positions include arginine 77, arginine 102, and aspartate 129 to serine 137. Residues isoleucine 193 and glycine 198–alanine 200 contribute to the uracil site. Aspartate 199 contacts 5-phospho-alpha-D-ribose 1-diphosphate.

It belongs to the UPRTase family. Requires Mg(2+) as cofactor.

The catalysed reaction is UMP + diphosphate = 5-phospho-alpha-D-ribose 1-diphosphate + uracil. It participates in pyrimidine metabolism; UMP biosynthesis via salvage pathway; UMP from uracil: step 1/1. Allosterically activated by GTP. In terms of biological role, catalyzes the conversion of uracil and 5-phospho-alpha-D-ribose 1-diphosphate (PRPP) to UMP and diphosphate. This is Uracil phosphoribosyltransferase from Mycoplasmopsis agalactiae (strain NCTC 10123 / CIP 59.7 / PG2) (Mycoplasma agalactiae).